A 316-amino-acid chain; its full sequence is Very-long-chain 3-oxooacyl-coA reductase let-767 (316 aa).

NADP(+)-binding positions include 47–76 (ASWA…NVLL) and Asp106. Ser189 provides a ligand contact to substrate. Tyr202 acts as the Proton acceptor in catalysis. Residue Lys206 coordinates NADP(+).

The protein belongs to the short-chain dehydrogenases/reductases (SDR) family. 17-beta-HSD 3 subfamily. In terms of tissue distribution, expressed in the gut of larva and adult.

It carries out the reaction a very-long-chain (3R)-3-hydroxyacyl-CoA + NADP(+) = a very-long-chain 3-oxoacyl-CoA + NADPH + H(+). The enzyme catalyses (omega-1)-methyl-(3R)-hydroxy-fatty acyl-CoA + NADP(+) = (omega-1)-methyl-3-oxo-fatty acyl-CoA + NADPH + H(+). It catalyses the reaction a 17beta-hydroxy steroid + NADP(+) = a 17-oxo steroid + NADPH + H(+). The protein operates within lipid metabolism; fatty acid biosynthesis. Required for branched-chain fatty acid synthesis (such as (omega-1)-methyl-fatty acids). Catalyzes the reduction of the 3-keto-fatty acyl-CoA intermediate that is formed in each cycle of fatty acid elongation. Very long-chain fatty acids (VLCFAs) serve as precursors for ceramide and sphingolipids. Involved in hormone production as it metabolizes 4-androstendione (androst-4-ene-3,17-dione) into testosterone and estrone into estradiol (17beta-estradiol) in vitro, but the physiological steroid substrate is unknown. The chain is Very-long-chain 3-oxooacyl-coA reductase let-767 (let-767) from Caenorhabditis elegans.